A 626-amino-acid chain; its full sequence is Mitogen-activated protein kinase kinase kinase 3 (626 aa).

The PB1 domain occupies 44-123 (DVRIKFEHNG…KSLRILLLSQ (80 aa)). Disordered stretches follow at residues 125–184 (RNHT…YVPE) and 218–273 (SSAE…VKGG). 4 stretches are compositionally biased toward polar residues: residues 128-137 (TSSSPHSGVS), 144-155 (PSQSAGDINTIY), 165-174 (LSVSSQNPGR), and 219-247 (SAEN…QMSR). Phosphoserine occurs at positions 147 and 166. Residues S250 and S312 each carry the phosphoserine modification. The span at 250–270 (SFPDNRKECSDRETQLYDKGV) shows a compositional bias: basic and acidic residues. Position 337 is a phosphoserine; by SGK1 (S337). Position 340 is a phosphoserine (S340). The Protein kinase domain occupies 362–622 (WRRGKLLGQG…AEELLTHHFA (261 aa)). Residues 368–376 (LGQGAFGRV) and K391 contribute to the ATP site. D489 serves as the catalytic Proton acceptor.

The protein belongs to the protein kinase superfamily. STE Ser/Thr protein kinase family. MAP kinase kinase kinase subfamily. Binds both upstream activators and downstream substrates in multimolecular complexes. Part of a complex with MAP2K3, RAC1 and CCM2. Interacts with MAP2K5 and SPAG9. Requires Mg(2+) as cofactor. Phosphorylation at Ser-166 and Ser-337 by SGK1 inhibits its activity.

It catalyses the reaction L-seryl-[protein] + ATP = O-phospho-L-seryl-[protein] + ADP + H(+). The catalysed reaction is L-threonyl-[protein] + ATP = O-phospho-L-threonyl-[protein] + ADP + H(+). Activated by phosphorylation on Thr-530. Functionally, component of a protein kinase signal transduction cascade. Mediates activation of the NF-kappa-B, AP1 and DDIT3 transcriptional regulators. The polypeptide is Mitogen-activated protein kinase kinase kinase 3 (Map3k3) (Mus musculus (Mouse)).